The chain runs to 154 residues: Deoxyuridine 5'-triphosphate nucleotidohydrolase (154 aa).

Substrate-binding positions include 64–66 (RSG), Asn77, 81–83 (TID), and Lys91.

The protein belongs to the dUTPase family. In terms of assembly, homotrimer. Mg(2+) is required as a cofactor.

It catalyses the reaction dUTP + H2O = dUMP + diphosphate + H(+). Its pathway is pyrimidine metabolism; dUMP biosynthesis; dUMP from dCTP (dUTP route): step 2/2. In terms of biological role, this enzyme is involved in nucleotide metabolism: it produces dUMP, the immediate precursor of thymidine nucleotides and it decreases the intracellular concentration of dUTP so that uracil cannot be incorporated into DNA. The sequence is that of Deoxyuridine 5'-triphosphate nucleotidohydrolase from Mycobacterium avium (strain 104).